Here is a 116-residue protein sequence, read N- to C-terminus: Large ribosomal subunit protein bL17 (116 aa).

The protein belongs to the bacterial ribosomal protein bL17 family. In terms of assembly, part of the 50S ribosomal subunit. Contacts protein L32.

The sequence is that of Large ribosomal subunit protein bL17 from Synechococcus sp. (strain JA-2-3B'a(2-13)) (Cyanobacteria bacterium Yellowstone B-Prime).